We begin with the raw amino-acid sequence, 425 residues long: Serine hydroxymethyltransferase (425 aa).

(6S)-5,6,7,8-tetrahydrofolate is bound by residues L128 and 132–134 (GHL). Residue K237 is modified to N6-(pyridoxal phosphate)lysine.

It belongs to the SHMT family. As to quaternary structure, homodimer. Pyridoxal 5'-phosphate serves as cofactor.

Its subcellular location is the cytoplasm. The enzyme catalyses (6R)-5,10-methylene-5,6,7,8-tetrahydrofolate + glycine + H2O = (6S)-5,6,7,8-tetrahydrofolate + L-serine. It participates in one-carbon metabolism; tetrahydrofolate interconversion. The protein operates within amino-acid biosynthesis; glycine biosynthesis; glycine from L-serine: step 1/1. Its function is as follows. Catalyzes the reversible interconversion of serine and glycine with tetrahydrofolate (THF) serving as the one-carbon carrier. This reaction serves as the major source of one-carbon groups required for the biosynthesis of purines, thymidylate, methionine, and other important biomolecules. Also exhibits THF-independent aldolase activity toward beta-hydroxyamino acids, producing glycine and aldehydes, via a retro-aldol mechanism. This chain is Serine hydroxymethyltransferase, found in Wolbachia pipientis subsp. Culex pipiens (strain wPip).